Consider the following 100-residue polypeptide: NADH-quinone oxidoreductase subunit K (100 aa).

The next 3 membrane-spanning stretches (helical) occupy residues 2–22 (IPLS…VAGF), 28–48 (IIVM…NLVA), and 64–84 (FVIT…ICLF).

It belongs to the complex I subunit 4L family. In terms of assembly, NDH-1 is composed of 14 different subunits. Subunits NuoA, H, J, K, L, M, N constitute the membrane sector of the complex.

The protein localises to the cell inner membrane. It catalyses the reaction a quinone + NADH + 5 H(+)(in) = a quinol + NAD(+) + 4 H(+)(out). Functionally, NDH-1 shuttles electrons from NADH, via FMN and iron-sulfur (Fe-S) centers, to quinones in the respiratory chain. The immediate electron acceptor for the enzyme in this species is believed to be ubiquinone. Couples the redox reaction to proton translocation (for every two electrons transferred, four hydrogen ions are translocated across the cytoplasmic membrane), and thus conserves the redox energy in a proton gradient. This is NADH-quinone oxidoreductase subunit K from Desulfovibrio desulfuricans (strain ATCC 27774 / DSM 6949 / MB).